A 102-amino-acid chain; its full sequence is Aspartyl/glutamyl-tRNA(Asn/Gln) amidotransferase subunit C (102 aa).

It belongs to the GatC family. Heterotrimer of A, B and C subunits.

The enzyme catalyses L-glutamyl-tRNA(Gln) + L-glutamine + ATP + H2O = L-glutaminyl-tRNA(Gln) + L-glutamate + ADP + phosphate + H(+). It catalyses the reaction L-aspartyl-tRNA(Asn) + L-glutamine + ATP + H2O = L-asparaginyl-tRNA(Asn) + L-glutamate + ADP + phosphate + 2 H(+). Its function is as follows. Allows the formation of correctly charged Asn-tRNA(Asn) or Gln-tRNA(Gln) through the transamidation of misacylated Asp-tRNA(Asn) or Glu-tRNA(Gln) in organisms which lack either or both of asparaginyl-tRNA or glutaminyl-tRNA synthetases. The reaction takes place in the presence of glutamine and ATP through an activated phospho-Asp-tRNA(Asn) or phospho-Glu-tRNA(Gln). The protein is Aspartyl/glutamyl-tRNA(Asn/Gln) amidotransferase subunit C of Bordetella petrii (strain ATCC BAA-461 / DSM 12804 / CCUG 43448).